The sequence spans 893 residues: TBC domain-containing protein kinase-like protein (893 aa).

The Protein kinase domain occupies 1-273 (MFPLKDAEMG…PDELMKDQVF (273 aa)). In terms of domain architecture, Rab-GAP TBC spans 466 to 651 (DIPPLMRGLT…HLWDTLLLGN (186 aa)).

Belongs to the protein kinase superfamily. In terms of assembly, component of the FERRY complex composed of five subunits, TBCK, PPP1R21, FERRY3, CRYZL1 and GATD1 with a ratio of 1:2:1:2:4, respectively.

It localises to the cytoplasm. It is found in the cytoskeleton. The protein resides in the spindle. Its subcellular location is the midbody. The protein localises to the early endosome. Functionally, component of the FERRY complex (Five-subunit Endosomal Rab5 and RNA/ribosome intermediary). The FERRY complex directly interacts with mRNAs and RAB5A, and functions as a RAB5A effector involved in the localization and the distribution of specific mRNAs most likely by mediating their endosomal transport. The complex recruits mRNAs and ribosomes to early endosomes through direct mRNA-interaction. Also involved in the modulation of mTOR signaling and expression of mTOR complex components. Involved in the control of actin-cytoskeleton organization. The chain is TBC domain-containing protein kinase-like protein (Tbck) from Mus musculus (Mouse).